The primary structure comprises 194 residues: CASP-like protein 4D1 (194 aa).

The Cytoplasmic segment spans residues 1 to 10 (MASRTVLLPS). Residues 11-31 (AVLILRLLSLGLLAASLALIA) traverse the membrane as a helical segment. Over 32–55 (ADKLNVDSDPPQRYTFRDVYAYRY) the chain is Extracellular. Residues 56–76 (VLAVAVIGCAYTLLQLPLAAV) form a helical membrane-spanning segment. Residues 77-94 (SIIASGNNKRGIGAGGGS) lie on the Cytoplasmic side of the membrane. Residues 95–115 (VAVALLVLVLLADVVFALLLA) traverse the membrane as a helical segment. At 116–161 (TGAAAGFAFTYDVKRYLDGQFDDDSIGTPEVDKLHRDMDKFFDLAY) the chain is on the extracellular side. The chain crosses the membrane as a helical span at residues 162–182 (AAAGLMLAAAACMALVIMLSV). Topologically, residues 183–194 (YSLARQVRSDYI) are cytoplasmic.

It belongs to the Casparian strip membrane proteins (CASP) family. Homodimer and heterodimers.

Its subcellular location is the cell membrane. The chain is CASP-like protein 4D1 from Sorghum bicolor (Sorghum).